A 63-amino-acid polypeptide reads, in one-letter code: Large ribosomal subunit protein uL29 (63 aa).

The protein belongs to the universal ribosomal protein uL29 family.

This chain is Large ribosomal subunit protein uL29, found in Vibrio parahaemolyticus serotype O3:K6 (strain RIMD 2210633).